The chain runs to 232 residues: Large ribosomal subunit protein uL1 (232 aa).

It belongs to the universal ribosomal protein uL1 family. As to quaternary structure, part of the 50S ribosomal subunit.

In terms of biological role, binds directly to 23S rRNA. The L1 stalk is quite mobile in the ribosome, and is involved in E site tRNA release. Its function is as follows. Protein L1 is also a translational repressor protein, it controls the translation of the L11 operon by binding to its mRNA. The sequence is that of Large ribosomal subunit protein uL1 from Syntrophus aciditrophicus (strain SB).